The chain runs to 229 residues: Uracil-DNA glycosylase (229 aa).

The active-site Proton acceptor is the Asp65.

It belongs to the uracil-DNA glycosylase (UDG) superfamily. UNG family.

It is found in the cytoplasm. It catalyses the reaction Hydrolyzes single-stranded DNA or mismatched double-stranded DNA and polynucleotides, releasing free uracil.. In terms of biological role, excises uracil residues from the DNA which can arise as a result of misincorporation of dUMP residues by DNA polymerase or due to deamination of cytosine. The sequence is that of Uracil-DNA glycosylase from Latilactobacillus sakei subsp. sakei (strain 23K) (Lactobacillus sakei subsp. sakei).